We begin with the raw amino-acid sequence, 260 residues long: CD40 ligand (260 aa).

At 1–22 (MIETYSQPSPRSVATGLPASMK) the chain is on the cytoplasmic side. Residues 23-46 (IFMYLLTVFLITQMIGSVLFAVYL) form a helical; Signal-anchor for type II membrane protein membrane-spanning segment. At 47-260 (HRRLDKVEEE…GFSSFGLLKL (214 aa)) the chain is on the extracellular side. One can recognise a THD domain in the interval 121–260 (IAAHVVSEAN…GFSSFGLLKL (140 aa)). The cysteines at positions 177 and 217 are disulfide-linked. Residue N239 is glycosylated (N-linked (GlcNAc...) asparagine).

Belongs to the tumor necrosis factor family. Homotrimer. Interacts with CD28. CD40 ligand, soluble form: Exists as either a monomer or a homotrimer. Forms a ternary complex between CD40 and integrins for CD40-CD40LG signaling. The soluble form derives from the membrane form by proteolytic processing. Specifically expressed on activated CD4+ T-lymphocytes.

Its subcellular location is the cell membrane. The protein resides in the cell surface. It localises to the secreted. Cytokine that acts as a ligand to CD40/TNFRSF5. Costimulates T-cell proliferation and cytokine production. Its cross-linking on T-cells generates a costimulatory signal which enhances the production of IL4 and IL10 in conjunction with the TCR/CD3 ligation and CD28 costimulation. Induces the activation of NF-kappa-B. Induces the activation of kinases MAPK8 and PAK2 in T-cells. Mediates B-cell proliferation in the absence of co-stimulus as well as IgE production in the presence of IL4. Involved in immunoglobulin class switching. In terms of biological role, acts as a ligand for integrins, specifically ITGA5:ITGB1 and ITGAV:ITGB3; both integrins and the CD40 receptor are required for activation of CD40-CD40LG signaling, which have cell-type dependent effects, such as B-cell activation, NF-kappa-B signaling and anti-apoptotic signaling. The polypeptide is CD40 ligand (Cd40lg) (Mus musculus (Mouse)).